A 221-amino-acid chain; its full sequence is Guanylate kinase (221 aa).

In terms of domain architecture, Guanylate kinase-like spans 20-198 (GSLFMVVAPS…ALAELRTVVQ (179 aa)). 27-34 (APSGAGKS) provides a ligand contact to ATP.

It belongs to the guanylate kinase family.

The protein resides in the cytoplasm. The catalysed reaction is GMP + ATP = GDP + ADP. In terms of biological role, essential for recycling GMP and indirectly, cGMP. This chain is Guanylate kinase, found in Ralstonia nicotianae (strain ATCC BAA-1114 / GMI1000) (Ralstonia solanacearum).